Reading from the N-terminus, the 342-residue chain is tRNA N6-adenosine threonylcarbamoyltransferase (342 aa).

Fe cation-binding residues include histidine 120 and histidine 124. Residues 142–146 (VVSGG), aspartate 175, glycine 188, aspartate 192, and asparagine 281 contribute to the substrate site. Aspartate 310 contacts Fe cation.

The protein belongs to the KAE1 / TsaD family. Fe(2+) serves as cofactor.

It localises to the cytoplasm. It catalyses the reaction L-threonylcarbamoyladenylate + adenosine(37) in tRNA = N(6)-L-threonylcarbamoyladenosine(37) in tRNA + AMP + H(+). Required for the formation of a threonylcarbamoyl group on adenosine at position 37 (t(6)A37) in tRNAs that read codons beginning with adenine. Is involved in the transfer of the threonylcarbamoyl moiety of threonylcarbamoyl-AMP (TC-AMP) to the N6 group of A37, together with TsaE and TsaB. TsaD likely plays a direct catalytic role in this reaction. The chain is tRNA N6-adenosine threonylcarbamoyltransferase from Geobacillus kaustophilus (strain HTA426).